The chain runs to 613 residues: Leucine aminopeptidase 2 (613 aa).

A peptide is bound by residues 134–136 (QAQ) and 265–270 (PYGGME). A Zn(2+)-binding site is contributed by His294. Catalysis depends on Glu295, which acts as the Proton acceptor. The Zn(2+) site is built by His298 and Glu317. Tyr382 functions as the Proton donor in the catalytic mechanism.

This sequence belongs to the peptidase M1 family. Requires Zn(2+) as cofactor.

The protein localises to the cytoplasm. It localises to the nucleus. It carries out the reaction an epoxide + H2O = an ethanediol. Its function is as follows. Aminopeptidase that preferentially cleaves di- and tripeptides. Also has low epoxide hydrolase activity (in vitro). Can hydrolyze the epoxide leukotriene LTA(4) but it forms preferentially 5,6-dihydroxy-7,9,11,14-eicosatetraenoic acid rather than the cytokine leukotriene B(4) as the product compared to the homologous mammalian enzyme (in vitro). This chain is Leucine aminopeptidase 2, found in Pyricularia oryzae (strain 70-15 / ATCC MYA-4617 / FGSC 8958) (Rice blast fungus).